The chain runs to 107 residues: Thiosulfate sulfurtransferase GlpE (107 aa).

Residues 16 to 104 enclose the Rhodanese domain; that stretch reads KKRDIVIADV…WKAHHPTSDA (89 aa). Cys-64 serves as the catalytic Cysteine persulfide intermediate.

The protein belongs to the GlpE family.

It is found in the cytoplasm. The enzyme catalyses thiosulfate + hydrogen cyanide = thiocyanate + sulfite + 2 H(+). The catalysed reaction is thiosulfate + [thioredoxin]-dithiol = [thioredoxin]-disulfide + hydrogen sulfide + sulfite + 2 H(+). Its function is as follows. Transferase that catalyzes the transfer of sulfur from thiosulfate to thiophilic acceptors such as cyanide or dithiols. May function in a CysM-independent thiosulfate assimilation pathway by catalyzing the conversion of thiosulfate to sulfite, which can then be used for L-cysteine biosynthesis. In Coxiella burnetii (strain CbuK_Q154) (Coxiella burnetii (strain Q154)), this protein is Thiosulfate sulfurtransferase GlpE.